The following is a 323-amino-acid chain: Mitochondrial glutamate carrier 1 (323 aa).

3 Solcar repeats span residues 6 to 93 (ISLP…FRHQ), 101 to 214 (LTLP…LNQL), and 223 to 312 (SPFY…GIAE). A run of 6 helical transmembrane segments spans residues 12–32 (LING…IDLA), 62–82 (YFGM…EKAI), 107–127 (MLAG…MEML), 189–209 (GLGA…PLFA), 223–243 (SPFY…AVAV), and 292–312 (ALVI…GIAE).

Belongs to the mitochondrial carrier (TC 2.A.29) family. In terms of tissue distribution, detected in insulin-secreting beta-cells and pancreatic islets (at the protein level).

It is found in the mitochondrion inner membrane. It carries out the reaction L-glutamate(in) + H(+)(in) = L-glutamate(out) + H(+)(out). Mitochondrial glutamate/H(+) symporter. Responsible for the transport of glutamate from the cytosol into the mitochondrial matrix with the concomitant import of a proton. Plays a role in the control of glucose-stimulated insulin secretion. The sequence is that of Mitochondrial glutamate carrier 1 from Rattus norvegicus (Rat).